The sequence spans 199 residues: Chaperone protein TorD (199 aa).

This sequence belongs to the TorD/DmsD family. TorD subfamily.

The protein localises to the cytoplasm. Functionally, involved in the biogenesis of TorA. Acts on TorA before the insertion of the molybdenum cofactor and, as a result, probably favors a conformation of the apoenzyme that is competent for acquiring the cofactor. This Escherichia coli O8 (strain IAI1) protein is Chaperone protein TorD.